We begin with the raw amino-acid sequence, 194 residues long: Peptidyl-tRNA hydrolase (194 aa).

Residue Tyr17 participates in tRNA binding. Residue His22 is the Proton acceptor of the active site. 3 residues coordinate tRNA: Tyr68, Asn70, and Asn116.

This sequence belongs to the PTH family. As to quaternary structure, monomer.

Its subcellular location is the cytoplasm. It catalyses the reaction an N-acyl-L-alpha-aminoacyl-tRNA + H2O = an N-acyl-L-amino acid + a tRNA + H(+). Functionally, hydrolyzes ribosome-free peptidyl-tRNAs (with 1 or more amino acids incorporated), which drop off the ribosome during protein synthesis, or as a result of ribosome stalling. In terms of biological role, catalyzes the release of premature peptidyl moieties from peptidyl-tRNA molecules trapped in stalled 50S ribosomal subunits, and thus maintains levels of free tRNAs and 50S ribosomes. The sequence is that of Peptidyl-tRNA hydrolase from Pseudoalteromonas translucida (strain TAC 125).